The sequence spans 505 residues: Ikaros family zinc finger protein (505 aa).

C2H2-type zinc fingers lie at residues 18 to 40 (LTCE…KRSH), 46 to 68 (FQCN…VKLH), 74 to 96 (FKCS…IRTH), and 102 to 128 (YKCN…PGFH). 2 stretches are compositionally biased toward polar residues: residues 262–273 (FLNTPSPVTRSA) and 309–327 (RFQH…SQQP). 2 disordered regions span residues 262–296 (FLNT…DIGS) and 309–440 (RFQH…VSGS). The span at 336–345 (ILGGSLGGIC) shows a compositional bias: gly residues. Over residues 366 to 377 (ATSSPSNSCPDS) the composition is skewed to polar residues. Residues 393–406 (GSGSSTSRPNGSTG) are compositionally biased toward low complexity. Over residues 409-419 (HRPEMHQDNGR) the composition is skewed to basic and acidic residues. The span at 424-439 (SGASDSSSLPTYNVSG) shows a compositional bias: polar residues. 2 C2H2-type zinc fingers span residues 448 to 470 (YPCH…MGCH) and 476 to 500 (FECN…RGEH).

The protein belongs to the Ikaros C2H2-type zinc-finger protein family. As to quaternary structure, heterodimer and homodimer with other IKAROS family members. Expression is strongest in the blood, gills and intestine.

The protein resides in the nucleus. This chain is Ikaros family zinc finger protein, found in Myxine glutinosa (Atlantic hagfish).